The primary structure comprises 189 residues: Phosphoheptose isomerase (189 aa).

Positions 33-189 constitute an SIS domain; that stretch reads CTDTLKAGNK…ELVEREIYGG (157 aa). A substrate-binding site is contributed by 48–50; that stretch reads NGG. 2 residues coordinate Zn(2+): His57 and Glu61. Substrate-binding positions include Glu61, 90–91, 116–118, Ser121, and Gln168; these read ND and STS. Zn(2+) is bound by residues Gln168 and His176.

Belongs to the SIS family. GmhA subfamily. The cofactor is Zn(2+).

It localises to the cytoplasm. It catalyses the reaction 2 D-sedoheptulose 7-phosphate = D-glycero-alpha-D-manno-heptose 7-phosphate + D-glycero-beta-D-manno-heptose 7-phosphate. It participates in carbohydrate biosynthesis; D-glycero-D-manno-heptose 7-phosphate biosynthesis; D-glycero-alpha-D-manno-heptose 7-phosphate and D-glycero-beta-D-manno-heptose 7-phosphate from sedoheptulose 7-phosphate: step 1/1. Its function is as follows. Catalyzes the isomerization of sedoheptulose 7-phosphate in D-glycero-D-manno-heptose 7-phosphate. The sequence is that of Phosphoheptose isomerase from Akkermansia muciniphila (strain ATCC BAA-835 / DSM 22959 / JCM 33894 / BCRC 81048 / CCUG 64013 / CIP 107961 / Muc).